Reading from the N-terminus, the 140-residue chain is ATP synthase epsilon chain (140 aa).

The protein belongs to the ATPase epsilon chain family. In terms of assembly, F-type ATPases have 2 components, CF(1) - the catalytic core - and CF(0) - the membrane proton channel. CF(1) has five subunits: alpha(3), beta(3), gamma(1), delta(1), epsilon(1). CF(0) has three main subunits: a, b and c.

The protein resides in the cell inner membrane. In terms of biological role, produces ATP from ADP in the presence of a proton gradient across the membrane. This chain is ATP synthase epsilon chain, found in Xanthomonas oryzae pv. oryzae (strain MAFF 311018).